We begin with the raw amino-acid sequence, 159 residues long: MRIGHGFDVHAFGGEGPIIIGGVRIPYEKGLLAHSDGDVALHALTDALLGAAALGDIGKLFPDTDPAFKGADSRELLREAWRRIQAKGYTLGNVDVTIIAQAPKMLPHIPQMRVFIAEDLGCHMDDVNVKATTTEKLGFTGRGEGIACEAVALLMKAAK.

Residues aspartate 8 and histidine 10 each contribute to the a divalent metal cation site. Residues 8-10 (DVH) and 34-35 (HS) contribute to the 4-CDP-2-C-methyl-D-erythritol 2-phosphate site. Residue histidine 42 participates in a divalent metal cation binding. Residues 56–58 (DIG), 61–65 (FPDTD), 100–106 (AQAPKML), 132–135 (TTTE), phenylalanine 139, and arginine 142 each bind 4-CDP-2-C-methyl-D-erythritol 2-phosphate.

It belongs to the IspF family. In terms of assembly, homotrimer. A divalent metal cation serves as cofactor.

It carries out the reaction 4-CDP-2-C-methyl-D-erythritol 2-phosphate = 2-C-methyl-D-erythritol 2,4-cyclic diphosphate + CMP. Its pathway is isoprenoid biosynthesis; isopentenyl diphosphate biosynthesis via DXP pathway; isopentenyl diphosphate from 1-deoxy-D-xylulose 5-phosphate: step 4/6. In terms of biological role, involved in the biosynthesis of isopentenyl diphosphate (IPP) and dimethylallyl diphosphate (DMAPP), two major building blocks of isoprenoid compounds. Catalyzes the conversion of 4-diphosphocytidyl-2-C-methyl-D-erythritol 2-phosphate (CDP-ME2P) to 2-C-methyl-D-erythritol 2,4-cyclodiphosphate (ME-CPP) with a corresponding release of cytidine 5-monophosphate (CMP). This chain is 2-C-methyl-D-erythritol 2,4-cyclodiphosphate synthase, found in Salmonella typhi.